Here is a 684-residue protein sequence, read N- to C-terminus: Protein LDB19 (684 aa).

Disordered stretches follow at residues 462–483 (GEAQ…PAGL), 510–531 (SAEE…DKRI), and 593–632 (SSRV…TSGS). A compositionally biased stretch (low complexity) spans 593-602 (SSRVVSGPES).

The protein belongs to the LDB19 family.

The protein localises to the cytoplasm. Its subcellular location is the golgi apparatus. Functionally, may be involved in protein-linked oligosaccharide phosphorylation. In Eremothecium gossypii (strain ATCC 10895 / CBS 109.51 / FGSC 9923 / NRRL Y-1056) (Yeast), this protein is Protein LDB19 (LDB19).